The primary structure comprises 359 residues: E3 ubiquitin-protein ligase RNF146 (359 aa).

The RING-type zinc-finger motif lies at 37–75; that stretch reads CAICLQTCVHPVSLPCKHVFCYLCVKGASWLGKRCALCR. Glycyl lysine isopeptide (Lys-Gly) (interchain with G-Cter in ubiquitin) cross-links involve residues lysine 85 and lysine 95. A WWE domain is found at 92–168; that stretch reads EELKAASRGN…EHGRRRKIKR (77 aa). Residues tyrosine 108, arginine 111, and tryptophan 115 each contribute to the a glycoprotein site. Lysine 131 participates in a covalent cross-link: Glycyl lysine isopeptide (Lys-Gly) (interchain with G-Cter in ubiquitin). 4 residues coordinate a glycoprotein: tyrosine 145, glutamine 154, arginine 164, and lysine 176. A Glycyl lysine isopeptide (Lys-Gly) (interchain with G-Cter in ubiquitin) cross-link involves residue lysine 176. The interval 254–359 is disordered; the sequence is GDNTAERSHR…PDGQCTVTEV (106 aa). Residues 284-298 show a composition bias toward acidic residues; it reads SIEETESDASSDSED. Phosphoserine occurs at positions 290 and 294. Residues 306–323 are compositionally biased toward polar residues; that stretch reads HSLTQQRLLVSNANQTVP.

As to quaternary structure, can form homooligomers. Interacts with PARsylated AXIN1, AXIN2, BLZF1, CASC3, H1-2, IPO7, LIG3, NCL, PARP1, XRCC1, XRCC5 and XRCC6. Interacts with DDB1, DHX15, IQGAP1, LRPPRC, PARP2, PRKDC, RUVBL2, TNKS1 and TNKS2. Binding often leads to interactor ubiquitination, in the presence of the appropriate E1 and E2 enzymes, and proteasomal degradation. Ubiquitinated; autoubiquitinated. Polyubiquitinated in the presence of UBE2D1, UBE2D2 and UBE2D3. Multimonoubiquitinated in the presence of UBE2E1. Not ubiquitinated in the presence of UBE2H, CDC34, UBE2L3, UBE2L6, nor UBE2C. In the absence of PAR, autoubiquitination occurs on Lys-85, Lys-95 and Lys-176 via 'Lys-11' and 'Lys-48' ubiquitin linkages. In the presence of PAR, Lys-131 and Lys-176 are ubiquitinated via 'Lys-6', 'Lys-33' and 'Lys-48' ubiquitin linkages. Autoubiquitination is enhanced upon PAR-binding. As to expression, ubiquitously expressed. Up-regulated in brains from patients with Alzheimer disease.

It localises to the cytoplasm. The protein resides in the cytosol. It is found in the nucleus. It catalyses the reaction S-ubiquitinyl-[E2 ubiquitin-conjugating enzyme]-L-cysteine + [acceptor protein]-L-lysine = [E2 ubiquitin-conjugating enzyme]-L-cysteine + N(6)-ubiquitinyl-[acceptor protein]-L-lysine.. Its pathway is protein modification; protein ubiquitination. Its function is as follows. E3 ubiquitin-protein ligase that specifically binds poly-ADP-ribosylated (PARsylated) proteins and mediates their ubiquitination and subsequent degradation. May regulate many important biological processes, such as cell survival and DNA damage response. Acts as an activator of the Wnt signaling pathway by mediating the ubiquitination of PARsylated AXIN1 and AXIN2, 2 key components of the beta-catenin destruction complex. Acts in cooperation with tankyrase proteins (TNKS and TNKS2), which mediate PARsylation of target proteins AXIN1, AXIN2, BLZF1, CASC3, TNKS and TNKS2. Recognizes and binds tankyrase-dependent PARsylated proteins via its WWE domain and mediates their ubiquitination, leading to their degradation. Different ubiquitin linkage types have been observed: TNKS2 undergoes ubiquitination at 'Lys-48' and 'Lys-63', while AXIN1 is only ubiquitinated at 'Lys-48'. May regulate TNKS and TNKS2 subcellular location, preventing aggregation at a centrosomal location. Neuroprotective protein. Protects the brain against N-methyl-D-aspartate (NMDA) receptor-mediated glutamate excitotoxicity and ischemia, by interfering with PAR-induced cell death, called parthanatos. Prevents nuclear translocation of AIFM1 in a PAR-binding dependent manner. Does not affect PARP1 activation. Protects against cell death induced by DNA damaging agents, such as N-methyl-N-nitro-N-nitrosoguanidine (MNNG) and rescues cells from G1 arrest. Promotes cell survival after gamma-irradiation. Facilitates DNA repair. The sequence is that of E3 ubiquitin-protein ligase RNF146 (RNF146) from Homo sapiens (Human).